We begin with the raw amino-acid sequence, 256 residues long: 6-carboxyhexanoate--CoA ligase (256 aa).

It belongs to the BioW family. Homodimer. Mg(2+) serves as cofactor.

It catalyses the reaction heptanedioate + ATP + CoA = 6-carboxyhexanoyl-CoA + AMP + diphosphate. It participates in metabolic intermediate metabolism; pimeloyl-CoA biosynthesis; pimeloyl-CoA from pimelate: step 1/1. Catalyzes the transformation of pimelate into pimeloyl-CoA with concomitant hydrolysis of ATP to AMP. The sequence is that of 6-carboxyhexanoate--CoA ligase from Methanobrevibacter ruminantium (strain ATCC 35063 / DSM 1093 / JCM 13430 / OCM 146 / M1) (Methanobacterium ruminantium).